We begin with the raw amino-acid sequence, 366 residues long: Ribosomal RNA large subunit methyltransferase M (366 aa).

S-adenosyl-L-methionine contacts are provided by residues Ser188, 221–224 (CPGG), Asp240, Asp260, and Asp277. Lys306 serves as the catalytic Proton acceptor.

It belongs to the class I-like SAM-binding methyltransferase superfamily. RNA methyltransferase RlmE family. RlmM subfamily. As to quaternary structure, monomer.

It is found in the cytoplasm. It carries out the reaction cytidine(2498) in 23S rRNA + S-adenosyl-L-methionine = 2'-O-methylcytidine(2498) in 23S rRNA + S-adenosyl-L-homocysteine + H(+). Functionally, catalyzes the 2'-O-methylation at nucleotide C2498 in 23S rRNA. The protein is Ribosomal RNA large subunit methyltransferase M of Escherichia coli O139:H28 (strain E24377A / ETEC).